Reading from the N-terminus, the 303-residue chain is Cell wall mannoprotein HSP150 (303 aa).

The signal sequence occupies residues 1–18 (MQYKKTLVASALAATTLA). A propeptide spanning residues 19-72 (AYAPSEPWSTLTPTATYSGGVTDYASTFGIAVQPISTTSSASSAATTASSKAKR) is cleaved from the precursor. PIR1/2/3 repeat units follow at residues 71 to 89 (KRAA…TTTA) and 97 to 113 (AAAV…ATTK). The stretch at 114-134 (TTAAASLKLVMVKIQATTKTT) is one PIR1/2/3 3; degenerate repeat. 3 PIR1/2/3 repeats span residues 135-153 (AAAV…TKTT), 154-171 (AAAV…TTKT), and 172-190 (TQAA…SATS).

Belongs to the PIR protein family. Covalently linked to beta-1,3-glucan of the inner cell wall layer via an alkali-sensitive ester linkage between the gamma-carboxyl group of glutamic acids, arising from specific glutamines within the PIR1/2/3 repeats, and hydroxyl groups of glucoses of beta-1,3-glucan chains. In terms of processing, the propeptide is cleaved off in the late Golgi. While both peptides are secreted, only a fraction of the mature glycoprotein is incorporated into the cell wall. Post-translationally, O-glycosylated. Extensively O-mannosylated.

It localises to the secreted. The protein resides in the cell wall. Component of the outer cell wall layer. Required for stability of the cell wall and for optimal growth. Required for resistance against several antifungal and cell wall-perturbing agents and for tolerance to heat shock. The sequence is that of Cell wall mannoprotein HSP150 (HSP150) from Saccharomyces cerevisiae (strain AWRI1631) (Baker's yeast).